The following is a 776-amino-acid chain: LPS-assembly protein LptD (776 aa).

The signal sequence occupies residues 1–24 (MQHFSRTFLAASIATALFAPYAQA).

It belongs to the LptD family. As to quaternary structure, component of the lipopolysaccharide transport and assembly complex. Interacts with LptE and LptA.

It localises to the cell outer membrane. Functionally, together with LptE, is involved in the assembly of lipopolysaccharide (LPS) at the surface of the outer membrane. This is LPS-assembly protein LptD from Vibrio vulnificus (strain YJ016).